Reading from the N-terminus, the 154-residue chain is YCYICHSLKYDRWYSNRNSLCCVFLICVLTLVAIVPNLCMGTLQYDPRIYSCTFAQSVSSAYTIAVVVFHFLVPMVIVIFRYLRIWVLVLQIRWRAKPENNPRLKPQDFRNFVTMFVVFVLFAICWAPLNFIGLAVASDPASMAPRIPEWLFVA.

The Cytoplasmic portion of the chain corresponds to 1-19 (YCYICHSLKYDRWYSNRNS). A helical membrane pass occupies residues 20–40 (LCCVFLICVLTLVAIVPNLCM). Residues 41–62 (GTLQYDPRIYSCTFAQSVSSAY) are Extracellular-facing. A helical membrane pass occupies residues 63-83 (TIAVVVFHFLVPMVIVIFRYL). At 84–115 (RIWVLVLQIRWRAKPENNPRLKPQDFRNFVTM) the chain is on the cytoplasmic side. A helical transmembrane segment spans residues 116-136 (FVVFVLFAICWAPLNFIGLAV). The Extracellular portion of the chain corresponds to 137–149 (ASDPASMAPRIPE).

It belongs to the G-protein coupled receptor 1 family.

The protein resides in the cell membrane. Functionally, high affinity receptor for melatonin. Likely to mediate the reproductive and circadian actions of melatonin. The activity of this receptor is mediated by pertussis toxin sensitive G proteins that inhibit adenylate cyclase activity. This is Melatonin receptor type 1A (MTNR1A) from Sus scrofa (Pig).